Here is a 275-residue protein sequence, read N- to C-terminus: Taurine transport system permease protein TauC (275 aa).

7 consecutive transmembrane segments (helical) span residues 20–42 (LSRQVTLSIGTLAVLLTVWWTVA), 87–107 (IMLALFAAVLFGIPVGIAMGL), 124–144 (PVPPLAYLPLMVIWFGIGETS), 146–166 (ILLIYLAIFAPVAMSALAGVK), 186–206 (VLWFVILPGALPEILTGLRIG), 209–229 (VGWSTLVAAELIAATRGLGFM), and 236–256 (FLATDVVLAGIAVIAIIAFLL). The ABC transmembrane type-1 domain occupies 80-264 (LAASLTRIML…LLELGLRALQ (185 aa)).

This sequence belongs to the binding-protein-dependent transport system permease family. CysTW subfamily.

Its subcellular location is the cell inner membrane. Its function is as follows. Part of a binding-protein-dependent transport system for taurine. Probably responsible for the translocation of the substrate across the membrane. The chain is Taurine transport system permease protein TauC (tauC) from Escherichia coli (strain K12).